A 342-amino-acid chain; its full sequence is Small ribosomal subunit protein uS2 (342 aa).

Residues 235-283 form a disordered region; sequence EENAPFEQDEPRKPSQKPKQNRPENKPRFDKQAPRAAAKPEVKAEVKPE. The segment covering 255–283 has biased composition (basic and acidic residues); the sequence is NRPENKPRFDKQAPRAAAKPEVKAEVKPE.

This sequence belongs to the universal ribosomal protein uS2 family.

This Acholeplasma laidlawii (strain PG-8A) protein is Small ribosomal subunit protein uS2.